The following is a 416-amino-acid chain: Phosphoglycerate kinase (416 aa).

Position 2 is an N-acetylserine (serine 2). 10 residues coordinate (2R)-3-phosphoglycerate: valine 23, aspartate 24, phenylalanine 25, asparagine 26, glutamine 38, arginine 39, serine 62, histidine 63, glycine 65, and arginine 66. Residue lysine 82 forms a Glycyl lysine isopeptide (Lys-Gly) (interchain with G-Cter in ubiquitin) linkage. The residue at position 93 (threonine 93) is a Phosphothreonine. Serine 110 carries the post-translational modification Phosphoserine. Residues leucine 121 and arginine 122 each contribute to the (2R)-3-phosphoglycerate site. Phosphoserine occurs at positions 130 and 154. (2R)-3-phosphoglycerate contacts are provided by histidine 168 and arginine 169. Residue serine 172 is modified to Phosphoserine. Lysine 197 is covalently cross-linked (Glycyl lysine isopeptide (Lys-Gly) (interchain with G-Cter in ubiquitin)). Threonine 203 carries the post-translational modification Phosphothreonine. Glycine 212 is a binding site for ADP. Glycine 212 serves as a coordination point for CDP. Residues alanine 213 and lysine 214 each contribute to the AMP site. Alanine 213 and lysine 214 together coordinate ATP. Alanine 213 contributes to the Mg(2+) binding site. Mg(2+) contacts are provided by alanine 216 and aspartate 217. Position 217 (aspartate 217) interacts with CDP. Position 218 (lysine 218) interacts with AMP. Residue lysine 218 coordinates ATP. Residue glycine 236 participates in ADP binding. CDP is bound at residue glycine 236. Glycine 237 lines the AMP pocket. Residue glycine 237 coordinates ATP. Threonine 241 carries the post-translational modification Phosphothreonine. Glycyl lysine isopeptide (Lys-Gly) (interchain with G-Cter in ubiquitin) cross-links involve residues lysine 258 and lysine 274. The residue at position 298 (threonine 298) is a Phosphothreonine. Residue lysine 302 forms a Glycyl lysine isopeptide (Lys-Gly) (interchain with G-Cter in ubiquitin) linkage. Position 311 (glycine 311) interacts with AMP. Positions 311 and 312 each coordinate ATP. Serine 318 carries the phosphoserine modification. Threonine 331 is modified (phosphothreonine). Asparagine 335 contacts ATP. Positions 336 and 341 each coordinate CDP. Residue phenylalanine 341 coordinates ADP. AMP is bound at residue glutamate 342. Glutamate 342 is a binding site for ATP. Position 371 (glycine 371) interacts with (2R)-3-phosphoglycerate. Aspartate 373 and threonine 374 together coordinate ATP. Position 373 (aspartate 373) interacts with Mg(2+). Threonine 392 bears the Phosphothreonine mark. Residues glycine 394 and glycine 395 each coordinate (2R)-3-phosphoglycerate.

Belongs to the phosphoglycerate kinase family. In terms of assembly, monomer. Requires Mg(2+) as cofactor.

Its subcellular location is the cytoplasm. It is found in the mitochondrion. It carries out the reaction (2R)-3-phosphoglycerate + ATP = (2R)-3-phospho-glyceroyl phosphate + ADP. Its pathway is carbohydrate degradation; glycolysis; pyruvate from D-glyceraldehyde 3-phosphate: step 2/5. Catalyzes one of the two ATP producing reactions in the glycolytic pathway via the reversible conversion of 1,3-diphosphoglycerate to 3-phosphoglycerate. Both L- and D- forms of purine and pyrimidine nucleotides can be used as substrates, but the activity is much lower on pyrimidines. Negatively regulates the biosynthesis of acetyl-CoA from pyruvate in the mitochondrion. This chain is Phosphoglycerate kinase (PGK1), found in Saccharomyces cerevisiae (strain ATCC 204508 / S288c) (Baker's yeast).